The following is a 341-amino-acid chain: Diguanylate cyclase DgcP (341 aa).

In terms of domain architecture, GAF spans 18-154; the sequence is SLESLVRQLL…LFAGLIAQYI (137 aa). A GGDEF domain is found at 204 to 337; it reads HKIMIAFIDL…KQKTPFVAHP (134 aa). A Mg(2+)-binding site is contributed by D212. Residues N220, H225, and D229 each contribute to the substrate site. Residue D255 coordinates Mg(2+). D255 acts as the Proton acceptor in catalysis.

As to quaternary structure, homodimer. Mg(2+) is required as a cofactor.

It catalyses the reaction 2 GTP = 3',3'-c-di-GMP + 2 diphosphate. It participates in purine metabolism; 3',5'-cyclic di-GMP biosynthesis. Its function is as follows. Catalyzes the synthesis of cyclic-di-GMP (c-di-GMP) via the condensation of 2 GTP molecules. Cyclic-di-GMP is a second messenger which controls cell surface-associated traits in bacteria. The protein is Diguanylate cyclase DgcP of Escherichia coli (strain K12).